Reading from the N-terminus, the 355-residue chain is Uroporphyrinogen decarboxylase (355 aa).

Substrate contacts are provided by residues 27–31, Asp77, Tyr154, Thr209, and His327; that span reads RQAGR.

The protein belongs to the uroporphyrinogen decarboxylase family. Homodimer.

The protein resides in the cytoplasm. It catalyses the reaction uroporphyrinogen III + 4 H(+) = coproporphyrinogen III + 4 CO2. It participates in porphyrin-containing compound metabolism; protoporphyrin-IX biosynthesis; coproporphyrinogen-III from 5-aminolevulinate: step 4/4. Functionally, catalyzes the decarboxylation of four acetate groups of uroporphyrinogen-III to yield coproporphyrinogen-III. This is Uroporphyrinogen decarboxylase from Yersinia pestis bv. Antiqua (strain Antiqua).